The following is a 333-amino-acid chain: Galactinol synthase 1 (333 aa).

Residue Lys-104 is part of the active site. Mn(2+) is bound by residues Asp-120, Asp-122, and His-257.

Belongs to the glycosyltransferase 8 family. Galactosyltransferase subfamily. A divalent metal cation serves as cofactor. As to expression, expressed in source leaves, specifically in the mesophyll.

The protein resides in the cytoplasm. The enzyme catalyses myo-inositol + UDP-alpha-D-galactose = alpha-D-galactosyl-(1-&gt;3)-1D-myo-inositol + UDP + H(+). Major galactinol synthase mainly involved in the biosynthesis of storage raffinose family oligosaccharides (RFOs) that function as osmoprotectants. May promote plant stress tolerance. This Ajuga reptans (Bugle) protein is Galactinol synthase 1 (GOLS1).